A 289-amino-acid chain; its full sequence is 3-methyl-2-oxobutanoate hydroxymethyltransferase (289 aa).

A compositionally biased stretch (polar residues) spans 1-15 (MSTTFKLDTSTSRAN). The segment at 1–21 (MSTTFKLDTSTSRANPTPAPM) is disordered. The Mg(2+) site is built by D67 and D106. 3-methyl-2-oxobutanoate-binding positions include 67 to 68 (DS), D106, and K136. Position 138 (E138) interacts with Mg(2+). The active-site Proton acceptor is E205.

It belongs to the PanB family. As to quaternary structure, homodecamer; pentamer of dimers. Mg(2+) is required as a cofactor.

It is found in the cytoplasm. The catalysed reaction is 3-methyl-2-oxobutanoate + (6R)-5,10-methylene-5,6,7,8-tetrahydrofolate + H2O = 2-dehydropantoate + (6S)-5,6,7,8-tetrahydrofolate. It functions in the pathway cofactor biosynthesis; (R)-pantothenate biosynthesis; (R)-pantoate from 3-methyl-2-oxobutanoate: step 1/2. In terms of biological role, catalyzes the reversible reaction in which hydroxymethyl group from 5,10-methylenetetrahydrofolate is transferred onto alpha-ketoisovalerate to form ketopantoate. In Erythrobacter litoralis (strain HTCC2594), this protein is 3-methyl-2-oxobutanoate hydroxymethyltransferase.